Consider the following 187-residue polypeptide: Oligoribonuclease (187 aa).

An Exonuclease domain is found at 7–170 (LCWLDMEMTG…DDILESIEEM (164 aa)). Y128 is a catalytic residue.

It belongs to the oligoribonuclease family.

Its subcellular location is the cytoplasm. In terms of biological role, 3'-to-5' exoribonuclease specific for small oligoribonucleotides. This is Oligoribonuclease from Neisseria meningitidis serogroup A / serotype 4A (strain DSM 15465 / Z2491).